Consider the following 229-residue polypeptide: MIPIDIVERGLQDYAACFDEMQTFTARRGPDTPDTIWLVEHPPVFTLGLAGDPAHLLAPGNIPLVKVDRGGQITYHGPGQVVAYLLLDLRRRGLFVKALVDAIEAAVIQTLATYNVASERKAGAPGIYLSSGPHAGAKIAALGLKIRNGCSYHGVSLNLAMDLSPFTQINPCGYAGLETVDMVTAGARDASGRAVDANDWQTVSRDLANALVAQLQQRAQAHPAEAATA.

A BPL/LPL catalytic domain is found at 30 to 223 (PDTPDTIWLV…QLQQRAQAHP (194 aa)). Substrate contacts are provided by residues 69–76 (RGGQITYH), 141–143 (ALG), and 154–156 (GVS). Catalysis depends on C172, which acts as the Acyl-thioester intermediate.

It belongs to the LipB family.

Its subcellular location is the cytoplasm. It catalyses the reaction octanoyl-[ACP] + L-lysyl-[protein] = N(6)-octanoyl-L-lysyl-[protein] + holo-[ACP] + H(+). It functions in the pathway protein modification; protein lipoylation via endogenous pathway; protein N(6)-(lipoyl)lysine from octanoyl-[acyl-carrier-protein]: step 1/2. Catalyzes the transfer of endogenously produced octanoic acid from octanoyl-acyl-carrier-protein onto the lipoyl domains of lipoate-dependent enzymes. Lipoyl-ACP can also act as a substrate although octanoyl-ACP is likely to be the physiological substrate. In Ralstonia pickettii (strain 12J), this protein is Octanoyltransferase.